The following is a 119-amino-acid chain: Flagellar transcriptional regulator FlhD (119 aa).

Belongs to the FlhD family. As to quaternary structure, homodimer; disulfide-linked. Forms a heterohexamer composed of two FlhC and four FlhD subunits. Each FlhC binds a FlhD dimer, forming a heterotrimer, and a hexamer assembles by dimerization of two heterotrimers.

It localises to the cytoplasm. In terms of biological role, functions in complex with FlhC as a master transcriptional regulator that regulates transcription of several flagellar and non-flagellar operons by binding to their promoter region. Activates expression of class 2 flagellar genes, including fliA, which is a flagellum-specific sigma factor that turns on the class 3 genes. Also regulates genes whose products function in a variety of physiological pathways. In Shigella dysenteriae serotype 1 (strain Sd197), this protein is Flagellar transcriptional regulator FlhD.